A 146-amino-acid chain; its full sequence is Hydroxyproline-rich systemin (146 aa).

An N-terminal signal peptide occupies residues 1 to 24; sequence MISFFRAFFLIIIISFLIFVGAQA. Residues 25 to 48 constitute a propeptide that is removed on maturation; that stretch reads RTLLGNYHDDEMLIELKLESGNYG. The segment at 47-128 is disordered; sequence YGRTPYKTPP…PPPPKPQDEQ (82 aa). Proline 51, proline 55, proline 56, proline 57, proline 58, and proline 63 each carry 4-hydroxyproline. O-linked (Ara...) hydroxyproline glycans are attached at residues proline 51, proline 55, proline 56, proline 57, proline 58, and proline 63. The propeptide occupies 67 to 70; the sequence is EIVN. A 4-hydroxyproline mark is found at proline 79, proline 80, and proline 82. Proline 79, proline 80, and proline 82 each carry an O-linked (Ara...) hydroxyproline glycan. Positions 86–110 are excised as a propeptide; the sequence is PIIGQLTTITTTPHHDDTVAAPPVG. 4-hydroxyproline occurs at positions 119, 120, 121, and 122. O-linked (Ara...) hydroxyproline glycosylation is found at proline 119, proline 120, proline 121, and proline 122. A propeptide spanning residues 131 to 146 is cleaved from the precursor; the sequence is IIITSSSSTLPLQASY.

O-glycosylated; contains pentose side chains. Leaves.

The protein localises to the secreted. Functionally, activates a lipid-based signal transduction pathway in which linolenic acid is converted to jasmonic acid, a potent activator of defense gene transcription. Induces synthesis of proteinase inhibitors I and II in leaves when supplied through cut stems. In Solanum lycopersicum (Tomato), this protein is Hydroxyproline-rich systemin.